The primary structure comprises 202 residues: 3-isopropylmalate dehydratase small subunit (202 aa).

Belongs to the LeuD family. LeuD type 1 subfamily. Heterodimer of LeuC and LeuD.

The catalysed reaction is (2R,3S)-3-isopropylmalate = (2S)-2-isopropylmalate. The protein operates within amino-acid biosynthesis; L-leucine biosynthesis; L-leucine from 3-methyl-2-oxobutanoate: step 2/4. Catalyzes the isomerization between 2-isopropylmalate and 3-isopropylmalate, via the formation of 2-isopropylmaleate. This is 3-isopropylmalate dehydratase small subunit from Paenarthrobacter aurescens (strain TC1).